A 359-amino-acid polypeptide reads, in one-letter code: MLGRSLTSVLIVPTGIGCAVGGYAGDALPLARAIASVSDRLITHPNVMNGASLYWPLPNVAYVEGYALDRFAAGDWQLQPVHCNRIGLLLDAAIEPELRIRHQQVAEAAQATLGLSVTAAVITDAPLGVTLRQADSGSTWGTIDRPDSLLRAADQLLKAGCEAIAVIARFPDDPGAIALQDYRQGQGVDPLAGAEAVISHLIVREFQVPCAHAPALQPLPLDASISPRSAAEELGHTFLPCVLAGLSRAPRYRSATESIAESIRPESVDVVIAPETAIGGPGILHWAARGIPILAVAENRSTLDLRPVDLGVPVQHLQTHLEAVGWLAAYKAGLDPAALSPGDRRLSYLNHSVQQATSG.

Positions 1–17 (MLGRSLTSVLIVPTGIG) are cleaved as a signal peptide. Cys-18 is lipidated: N-palmitoyl cysteine. Cys-18 carries S-diacylglycerol cysteine lipidation.

The protein resides in the cell membrane. This is an uncharacterized protein from Synechococcus sp. (strain ATCC 27144 / PCC 6301 / SAUG 1402/1) (Anacystis nidulans).